A 432-amino-acid polypeptide reads, in one-letter code: Glutamyl-tRNA reductase (432 aa).

Substrate is bound by residues 49–52 (TCNR), Ser-101, 106–108 (ESQ), and Gln-112. Cys-50 serves as the catalytic Nucleophile. NADP(+) is bound at residue 181 to 186 (GTGETI).

The protein belongs to the glutamyl-tRNA reductase family. In terms of assembly, homodimer.

It carries out the reaction (S)-4-amino-5-oxopentanoate + tRNA(Glu) + NADP(+) = L-glutamyl-tRNA(Glu) + NADPH + H(+). Its pathway is porphyrin-containing compound metabolism; protoporphyrin-IX biosynthesis; 5-aminolevulinate from L-glutamyl-tRNA(Glu): step 1/2. Functionally, catalyzes the NADPH-dependent reduction of glutamyl-tRNA(Glu) to glutamate 1-semialdehyde (GSA). The sequence is that of Glutamyl-tRNA reductase from Xylella fastidiosa (strain M12).